A 392-amino-acid polypeptide reads, in one-letter code: ESX-1 secretion-associated protein EspA (392 aa).

The segment at 302-392 is disordered; sequence TRQALRPRAD…GQKVLVRNVV (91 aa). Over residues 334-344 the composition is skewed to gly residues; it reads QGMGGPVGMGG.

In terms of assembly, homodimer; disulfide-linked.

It is found in the secreted. Its function is as follows. Required for secretion of EsxA (ESAT-6) and EsxB (CFP-10) and for virulence. This chain is ESX-1 secretion-associated protein EspA, found in Mycobacterium tuberculosis (strain CDC 1551 / Oshkosh).